A 294-amino-acid chain; its full sequence is Lipoyl synthase (294 aa).

The [4Fe-4S] cluster site is built by Cys-35, Cys-40, Cys-46, Cys-61, Cys-65, Cys-68, and Ser-275. Residues Cys-46–Arg-264 enclose the Radical SAM core domain.

It belongs to the radical SAM superfamily. Lipoyl synthase family. [4Fe-4S] cluster is required as a cofactor.

The protein localises to the cytoplasm. It catalyses the reaction [[Fe-S] cluster scaffold protein carrying a second [4Fe-4S](2+) cluster] + N(6)-octanoyl-L-lysyl-[protein] + 2 oxidized [2Fe-2S]-[ferredoxin] + 2 S-adenosyl-L-methionine + 4 H(+) = [[Fe-S] cluster scaffold protein] + N(6)-[(R)-dihydrolipoyl]-L-lysyl-[protein] + 4 Fe(3+) + 2 hydrogen sulfide + 2 5'-deoxyadenosine + 2 L-methionine + 2 reduced [2Fe-2S]-[ferredoxin]. It functions in the pathway protein modification; protein lipoylation via endogenous pathway; protein N(6)-(lipoyl)lysine from octanoyl-[acyl-carrier-protein]: step 2/2. Catalyzes the radical-mediated insertion of two sulfur atoms into the C-6 and C-8 positions of the octanoyl moiety bound to the lipoyl domains of lipoate-dependent enzymes, thereby converting the octanoylated domains into lipoylated derivatives. The chain is Lipoyl synthase from Anaeromyxobacter dehalogenans (strain 2CP-C).